The chain runs to 276 residues: Large ribosomal subunit protein uL2 (276 aa).

Disordered stretches follow at residues 1–60 (MSIK…RHKR) and 226–276 (NAVD…KRNQ). A compositionally biased stretch (basic and acidic residues) spans 20–31 (SKEEITREEPEK). 2 stretches are compositionally biased toward basic residues: residues 50–60 (STRRQGGRHKR) and 258–276 (KTRR…KRNQ).

Belongs to the universal ribosomal protein uL2 family. As to quaternary structure, part of the 50S ribosomal subunit. Forms a bridge to the 30S subunit in the 70S ribosome.

In terms of biological role, one of the primary rRNA binding proteins. Required for association of the 30S and 50S subunits to form the 70S ribosome, for tRNA binding and peptide bond formation. It has been suggested to have peptidyltransferase activity; this is somewhat controversial. Makes several contacts with the 16S rRNA in the 70S ribosome. The protein is Large ribosomal subunit protein uL2 of Natranaerobius thermophilus (strain ATCC BAA-1301 / DSM 18059 / JW/NM-WN-LF).